The sequence spans 151 residues: Neuroglobin (151 aa).

In terms of domain architecture, Globin spans 1–149; the sequence is MERPEPELIR…VVQAMSRGWD (149 aa). 2 residues coordinate heme b: histidine 64 and histidine 96.

It belongs to the globin family. Monomer. Homodimer and homotetramer; disulfide-linked. Mainly monomeric but also detected as part of homodimers and homotetramers. Interacts with 14-3-3 proteins; regulates the phosphorylation of NGB. Could interact (ferrous form) with G-alpha(i) proteins (GTP-bound form). Phosphorylated during hypoxia by ERK1/ERK2. Phosphorylation regulates the heme pocket hexacoordination preventing the association of His-64 with the heme metal center. Thereby, promotes the access of dioxygen and nitrite to the heme and stimulates the nitrite reductase activity. Phosphorylation during hypoxia is stabilized by 14-3-3 proteins.

The protein resides in the cytoplasm. It is found in the cytosol. The protein localises to the mitochondrion matrix. It catalyses the reaction Fe(III)-heme b-[protein] + nitric oxide + H2O = Fe(II)-heme b-[protein] + nitrite + 2 H(+). Its function is as follows. Monomeric globin with a bis-histidyl six-coordinate heme-iron atom through which it can bind dioxygen, carbon monoxide and nitric oxide. Could help transport oxygen and increase its availability to the metabolically active neuronal tissues, though its low quantity in tissues as well as its high affinity for dioxygen, which may limit its oxygen-releasing ability, argue against it. The ferrous/deoxygenated form exhibits a nitrite reductase activity and it could produce nitric oxide which in turn inhibits cellular respiration in response to hypoxia. In its ferrous/deoxygenated state, it may also exhibit GDI (Guanine nucleotide Dissociation Inhibitor) activity toward heterotrimeric G-alpha proteins, thereby regulating signal transduction to facilitate neuroprotective responses in the wake of hypoxia and associated oxidative stress. This is Neuroglobin from Macaca mulatta (Rhesus macaque).